Reading from the N-terminus, the 89-residue chain is MSLNAEQKSEIVEQFRRSPSDTGSPEVQIALLSARIQHLTEHFSVHKQDHHSRQGLLKLVSQRRKLLDYLKRKDRGRYQDVIERLGIRK.

A disordered region spans residues 1-24 (MSLNAEQKSEIVEQFRRSPSDTGS). A compositionally biased stretch (basic and acidic residues) spans 7–19 (QKSEIVEQFRRSP).

Belongs to the universal ribosomal protein uS15 family. In terms of assembly, part of the 30S ribosomal subunit. Forms a bridge to the 50S subunit in the 70S ribosome, contacting the 23S rRNA.

Its function is as follows. One of the primary rRNA binding proteins, it binds directly to 16S rRNA where it helps nucleate assembly of the platform of the 30S subunit by binding and bridging several RNA helices of the 16S rRNA. In terms of biological role, forms an intersubunit bridge (bridge B4) with the 23S rRNA of the 50S subunit in the ribosome. The sequence is that of Small ribosomal subunit protein uS15 from Halorhodospira halophila (strain DSM 244 / SL1) (Ectothiorhodospira halophila (strain DSM 244 / SL1)).